Reading from the N-terminus, the 100-residue chain is NADH-ubiquinone oxidoreductase chain 4L (100 aa).

The next 3 helical transmembrane spans lie at 3–23, 28–48, and 62–82; these read LVKY…GIFL, ILIM…NFLV, and ALFV…ILVI.

Belongs to the complex I subunit 4L family. Complex I is composed of about 45 different subunits.

Its subcellular location is the mitochondrion membrane. It catalyses the reaction a ubiquinone + NADH + 5 H(+)(in) = a ubiquinol + NAD(+) + 4 H(+)(out). Functionally, core subunit of the mitochondrial membrane respiratory chain NADH dehydrogenase (Complex I) that is believed to belong to the minimal assembly required for catalysis. Complex I functions in the transfer of electrons from NADH to the respiratory chain. The immediate electron acceptor for the enzyme is believed to be ubiquinone. The protein is NADH-ubiquinone oxidoreductase chain 4L (ND4L) of Marchantia polymorpha (Common liverwort).